Here is a 320-residue protein sequence, read N- to C-terminus: Glyoxylate/hydroxypyruvate reductase B (320 aa).

Catalysis depends on residues R233 and E262. Catalysis depends on H281, which acts as the Proton donor.

It belongs to the D-isomer specific 2-hydroxyacid dehydrogenase family. GhrB subfamily. Homodimer.

Its subcellular location is the cytoplasm. The enzyme catalyses glycolate + NADP(+) = glyoxylate + NADPH + H(+). It catalyses the reaction (R)-glycerate + NAD(+) = 3-hydroxypyruvate + NADH + H(+). It carries out the reaction (R)-glycerate + NADP(+) = 3-hydroxypyruvate + NADPH + H(+). Functionally, catalyzes the NADPH-dependent reduction of glyoxylate and hydroxypyruvate into glycolate and glycerate, respectively. This Pectobacterium atrosepticum (strain SCRI 1043 / ATCC BAA-672) (Erwinia carotovora subsp. atroseptica) protein is Glyoxylate/hydroxypyruvate reductase B.